The sequence spans 860 residues: Leucine--tRNA ligase (860 aa).

Residues 42 to 52 (PYPSGRLHMGH) carry the 'HIGH' region motif. Residues 619–623 (KMSKS) carry the 'KMSKS' region motif. Lys-622 is an ATP binding site.

It belongs to the class-I aminoacyl-tRNA synthetase family.

The protein localises to the cytoplasm. It catalyses the reaction tRNA(Leu) + L-leucine + ATP = L-leucyl-tRNA(Leu) + AMP + diphosphate. The sequence is that of Leucine--tRNA ligase from Escherichia coli O81 (strain ED1a).